The sequence spans 133 residues: p53 and DNA damage-regulated protein 1 (133 aa).

Belongs to the prefoldin subunit beta family. In terms of assembly, component of the PAQosome complex which is responsible for the biogenesis of several protein complexes and which consists of R2TP complex members RUVBL1, RUVBL2, RPAP3 and PIH1D1, URI complex members PFDN2, PFDN6, PDRG1, UXT and URI1 as well as ASDURF, POLR2E and DNAAF10/WDR92.

It localises to the cytoplasm. In terms of biological role, may play a role in chaperone-mediated protein folding. The sequence is that of p53 and DNA damage-regulated protein 1 (PDRG1) from Bos taurus (Bovine).